We begin with the raw amino-acid sequence, 463 residues long: Ribosomal protein uS12 methylthiotransferase RimO (463 aa).

Residues 15–130 (PKVGFVSLGC…VMQAVHSHLP (116 aa)) form the MTTase N-terminal domain. [4Fe-4S] cluster-binding residues include cysteine 24, cysteine 60, cysteine 89, cysteine 161, cysteine 165, and cysteine 168. The Radical SAM core domain maps to 147–392 (LTPRHYAYLK…MEVAEQVSAK (246 aa)). Residues 395-463 (ARKVGKTLKV…ADGHDLWGEV (69 aa)) enclose the TRAM domain.

This sequence belongs to the methylthiotransferase family. RimO subfamily. [4Fe-4S] cluster serves as cofactor.

It localises to the cytoplasm. It carries out the reaction L-aspartate(89)-[ribosomal protein uS12]-hydrogen + (sulfur carrier)-SH + AH2 + 2 S-adenosyl-L-methionine = 3-methylsulfanyl-L-aspartate(89)-[ribosomal protein uS12]-hydrogen + (sulfur carrier)-H + 5'-deoxyadenosine + L-methionine + A + S-adenosyl-L-homocysteine + 2 H(+). Functionally, catalyzes the methylthiolation of an aspartic acid residue of ribosomal protein uS12. The chain is Ribosomal protein uS12 methylthiotransferase RimO from Paraburkholderia phymatum (strain DSM 17167 / CIP 108236 / LMG 21445 / STM815) (Burkholderia phymatum).